Consider the following 886-residue polypeptide: Isoleucine--tRNA ligase (886 aa).

A 'HIGH' region motif is present at residues 60–70 (PYANGDIHIGH). Glu546 is a binding site for L-isoleucyl-5'-AMP. The short motif at 587–591 (KMSKS) is the 'KMSKS' region element. Residue Lys590 participates in ATP binding. 4 residues coordinate Zn(2+): Cys856, Cys859, Cys870, and Cys873.

This sequence belongs to the class-I aminoacyl-tRNA synthetase family. IleS type 1 subfamily. As to quaternary structure, monomer. Zn(2+) is required as a cofactor.

The protein localises to the cytoplasm. It catalyses the reaction tRNA(Ile) + L-isoleucine + ATP = L-isoleucyl-tRNA(Ile) + AMP + diphosphate. Its function is as follows. Catalyzes the attachment of isoleucine to tRNA(Ile). As IleRS can inadvertently accommodate and process structurally similar amino acids such as valine, to avoid such errors it has two additional distinct tRNA(Ile)-dependent editing activities. One activity is designated as 'pretransfer' editing and involves the hydrolysis of activated Val-AMP. The other activity is designated 'posttransfer' editing and involves deacylation of mischarged Val-tRNA(Ile). This chain is Isoleucine--tRNA ligase, found in Mesomycoplasma hyopneumoniae (strain 7448) (Mycoplasma hyopneumoniae).